A 966-amino-acid chain; its full sequence is Protein STICHEL-like 4 (966 aa).

Disordered stretches follow at residues 64-118 (RSLR…DRSS) and 200-237 (RDNA…REQN). The segment covering 75–84 (LKEDHQDSRE) has biased composition (basic and acidic residues). Residues 98 to 108 (PIVSFGTSKVT) are compositionally biased toward polar residues. Residues 109–118 (PSDEKFDRSS) are compositionally biased toward basic and acidic residues. The segment covering 208-217 (SEMSIASNSV) has biased composition (polar residues). Residues 219–236 (RGEKYEGEEGGGGRDREQ) are compositionally biased toward basic and acidic residues. 384-391 (GPNGTGKT) contacts ATP. 4 residues coordinate Zn(2+): cysteine 403, cysteine 412, cysteine 415, and cysteine 418. A coiled-coil region spans residues 650–678 (SKEDMEKLKQALKTLSESEKQLRVSNDKL). Over residues 706–717 (FNHTPLTDSDPS) the composition is skewed to polar residues. The tract at residues 706-733 (FNHTPLTDSDPSNHVVAGTRRDDSKQGF) is disordered.

It belongs to the DnaX/STICHEL family.

This Arabidopsis thaliana (Mouse-ear cress) protein is Protein STICHEL-like 4.